The primary structure comprises 56 residues: Cytochrome b-c1 complex subunit 10 (56 aa).

Over methionine 1–glutamate 12 the chain is Mitochondrial matrix. Residues leucine 13 to alanine 35 form a helical membrane-spanning segment. Over threonine 36 to asparagine 56 the chain is Mitochondrial intermembrane.

Belongs to the UQCR11/QCR10 family. In terms of assembly, component of the ubiquinol-cytochrome c oxidoreductase (cytochrome b-c1 complex, complex III, CIII), a multisubunit enzyme composed of 11 subunits. The complex is composed of 3 respiratory subunits cytochrome b, cytochrome c1 and Rieske protein UQCRFS1, 2 core protein subunits UQCRC1/QCR1 and UQCRC2/QCR2, and 6 low-molecular weight protein subunits UQCRH/QCR6, UQCRB/QCR7, UQCRQ/QCR8, UQCR10/QCR9, UQCR11/QCR10 and subunit 9, the cleavage product of Rieske protein UQCRFS1. The complex exists as an obligatory dimer and forms supercomplexes (SCs) in the inner mitochondrial membrane with NADH-ubiquinone oxidoreductase (complex I, CI) and cytochrome c oxidase (complex IV, CIV), resulting in different assemblies (supercomplex SCI(1)III(2)IV(1) and megacomplex MCI(2)III(2)IV(2)).

It is found in the mitochondrion inner membrane. In terms of biological role, component of the ubiquinol-cytochrome c oxidoreductase, a multisubunit transmembrane complex that is part of the mitochondrial electron transport chain which drives oxidative phosphorylation. The respiratory chain contains 3 multisubunit complexes succinate dehydrogenase (complex II, CII), ubiquinol-cytochrome c oxidoreductase (cytochrome b-c1 complex, complex III, CIII) and cytochrome c oxidase (complex IV, CIV), that cooperate to transfer electrons derived from NADH and succinate to molecular oxygen, creating an electrochemical gradient over the inner membrane that drives transmembrane transport and the ATP synthase. The cytochrome b-c1 complex catalyzes electron transfer from ubiquinol to cytochrome c, linking this redox reaction to translocation of protons across the mitochondrial inner membrane, with protons being carried across the membrane as hydrogens on the quinol. In the process called Q cycle, 2 protons are consumed from the matrix, 4 protons are released into the intermembrane space and 2 electrons are passed to cytochrome c. QCR10 has a role in CIII assembly and RIP1 stability. This is Cytochrome b-c1 complex subunit 10 (UQCR11) from Homo sapiens (Human).